Reading from the N-terminus, the 207-residue chain is Large ribosomal subunit protein uL4 (207 aa).

The segment at 44–77 (RRQGTHDTKTRSEVRGGGRKPWRQKGTGRARHGT) is disordered. A compositionally biased stretch (basic and acidic residues) spans 47–59 (GTHDTKTRSEVRG). Residues 60 to 77 (GGRKPWRQKGTGRARHGT) are compositionally biased toward basic residues.

Belongs to the universal ribosomal protein uL4 family. As to quaternary structure, part of the 50S ribosomal subunit.

One of the primary rRNA binding proteins, this protein initially binds near the 5'-end of the 23S rRNA. It is important during the early stages of 50S assembly. It makes multiple contacts with different domains of the 23S rRNA in the assembled 50S subunit and ribosome. In terms of biological role, forms part of the polypeptide exit tunnel. This Desulforudis audaxviator (strain MP104C) protein is Large ribosomal subunit protein uL4.